The chain runs to 443 residues: Ribosomal protein uS12 methylthiotransferase RimO (443 aa).

An MTTase N-terminal domain is found at 10–120; that stretch reads PRVGFVSLGC…VMAAVHAQCP (111 aa). C19, C55, C84, C152, C156, and C159 together coordinate [4Fe-4S] cluster. The 238-residue stretch at 138–375 folds into the Radical SAM core domain; that stretch reads LTPRHYAYLK…MALQAEISAR (238 aa). The 66-residue stretch at 378-443 folds into the TRAM domain; it reads ARRVGTECTV…DEHDLYGRVL (66 aa).

This sequence belongs to the methylthiotransferase family. RimO subfamily. [4Fe-4S] cluster is required as a cofactor.

Its subcellular location is the cytoplasm. The catalysed reaction is L-aspartate(89)-[ribosomal protein uS12]-hydrogen + (sulfur carrier)-SH + AH2 + 2 S-adenosyl-L-methionine = 3-methylsulfanyl-L-aspartate(89)-[ribosomal protein uS12]-hydrogen + (sulfur carrier)-H + 5'-deoxyadenosine + L-methionine + A + S-adenosyl-L-homocysteine + 2 H(+). Functionally, catalyzes the methylthiolation of an aspartic acid residue of ribosomal protein uS12. This chain is Ribosomal protein uS12 methylthiotransferase RimO, found in Alkalilimnicola ehrlichii (strain ATCC BAA-1101 / DSM 17681 / MLHE-1).